We begin with the raw amino-acid sequence, 487 residues long: Serine carboxypeptidase-like 37 (487 aa).

An N-terminal signal peptide occupies residues 1–28 (MVKQQDWSVTTCVLLFLFLASQIHCRSG). N-linked (GlcNAc...) asparagine glycosylation occurs at asparagine 105. Cystine bridges form between cysteine 120–cysteine 368, cysteine 280–cysteine 291, and cysteine 315–cysteine 336. Serine 215 is an active-site residue. Residues asparagine 317, asparagine 357, and asparagine 375 are each glycosylated (N-linked (GlcNAc...) asparagine). Aspartate 407 is an active-site residue. N-linked (GlcNAc...) asparagine glycans are attached at residues asparagine 423 and asparagine 449. Residue histidine 460 is part of the active site.

The protein belongs to the peptidase S10 family. As to expression, expressed in seedlings, roots, leaves, stems, flowers and siliques.

Its subcellular location is the secreted. Functionally, probable carboxypeptidase. This is Serine carboxypeptidase-like 37 (SCPL37) from Arabidopsis thaliana (Mouse-ear cress).